A 212-amino-acid chain; its full sequence is MTSQRTRERLIQRLYEEGVSNAKVLEVIRKTPRHLFVDEALAHRAYEDTALPIGHNQTISQPFMVAHMSELLLEAGPLDKVLEIGTGSGYQTAILAQLVERVFSVERIKVLQDRAKERLVELNLRNVVFRWGDGCEGWPALAPYNGIIVTAVAPEVPQALLDQLAPGGRMVIPVGPAGETQQLMLIVREEQGFSRRVLGAVRFVPLLNGPLA.

Ser-60 is an active-site residue.

It belongs to the methyltransferase superfamily. L-isoaspartyl/D-aspartyl protein methyltransferase family.

Its subcellular location is the cytoplasm. The catalysed reaction is [protein]-L-isoaspartate + S-adenosyl-L-methionine = [protein]-L-isoaspartate alpha-methyl ester + S-adenosyl-L-homocysteine. Its function is as follows. Catalyzes the methyl esterification of L-isoaspartyl residues in peptides and proteins that result from spontaneous decomposition of normal L-aspartyl and L-asparaginyl residues. It plays a role in the repair and/or degradation of damaged proteins. This is Protein-L-isoaspartate O-methyltransferase from Pseudomonas entomophila (strain L48).